The following is a 229-amino-acid chain: Prolactin (229 aa).

The signal sequence occupies residues 1-30; sequence MDNKGWSLKGSLLPLLLLVSDLLLCQGVTS. Cys34 and Cys41 are joined by a disulfide. Residues Ser56, Ser64, and Ser120 each carry the phosphoserine modification. Disulfide bonds link Cys88–Cys204 and Cys221–Cys229.

It belongs to the somatotropin/prolactin family. Interacts with PRLR.

The protein localises to the secreted. Its function is as follows. Prolactin acts primarily on the mammary gland by promoting lactation. The polypeptide is Prolactin (PRL) (Neovison vison (American mink)).